We begin with the raw amino-acid sequence, 464 residues long: Glutamate decarboxylase (464 aa).

Lys274 bears the N6-(pyridoxal phosphate)lysine mark.

Belongs to the group II decarboxylase family. Pyridoxal 5'-phosphate is required as a cofactor.

It carries out the reaction L-glutamate + H(+) = 4-aminobutanoate + CO2. In terms of biological role, catalyzes the pyridoxal-dependent decarboxylation of glutamate to produce 4-aminobutanoate. Has weak activity with aspartate, but cannot complement an E.coli panD deletion mutant. The protein is Glutamate decarboxylase of Aliivibrio fischeri (strain ATCC 700601 / ES114) (Vibrio fischeri).